An 804-amino-acid chain; its full sequence is G-type lectin S-receptor-like serine/threonine-protein kinase At1g61490 (804 aa).

Positions 1–24 (MGKKRIVFFACLLLFTVLLRFSYA) are cleaved as a signal peptide. Residues 25–144 (GITTESPLSV…ASGRTLWESF (120 aa)) form the Bulb-type lectin domain. The Extracellular portion of the chain corresponds to 25–425 (GITTESPLSV…SELGGNKRNK (401 aa)). 6 N-linked (GlcNAc...) asparagine glycosylation sites follow: Asn53, Asn94, Asn117, Asn134, Asn236, and Asn267. One can recognise an EGF-like domain in the interval 278 to 314 (PANSCDIYGVCGPFGLCIVSVPLKCKCLKGFVPHSTE). 2 cysteine pairs are disulfide-bonded: Cys282–Cys294 and Cys288–Cys302. Asn320, Asn336, and Asn375 each carry an N-linked (GlcNAc...) asparagine glycan. Residues 333-415 (CQGNSTGKDV…GEILSIRLAH (83 aa)) enclose the PAN domain. 2 disulfides stabilise this stretch: Cys368–Cys389 and Cys372–Cys378. A helical membrane pass occupies residues 426-446 (IIVASTVSLSLFVILTSAAFG). Residues 447 to 804 (FWRYRVKHKA…EMTQSMILGR (358 aa)) are Cytoplasmic-facing. Residues 490-775 (FSLSNKLGQG…DLPSPKQPTF (286 aa)) form the Protein kinase domain. ATP is bound by residues 496 to 504 (LGQGGFGSV) and Lys518. Phosphoserine is present on residues Ser524 and Ser539. The interval 579–596 (RKKLEVDWPKRFDIVQGI) is caM-binding. Asp615 (proton acceptor) is an active-site residue. 2 positions are modified to phosphoserine: Ser619 and Ser632. Thr649 carries the phosphothreonine modification. The residue at position 692 (Ser692) is a Phosphoserine.

The protein belongs to the protein kinase superfamily. Ser/Thr protein kinase family.

It is found in the cell membrane. The catalysed reaction is L-seryl-[protein] + ATP = O-phospho-L-seryl-[protein] + ADP + H(+). It catalyses the reaction L-threonyl-[protein] + ATP = O-phospho-L-threonyl-[protein] + ADP + H(+). The protein is G-type lectin S-receptor-like serine/threonine-protein kinase At1g61490 of Arabidopsis thaliana (Mouse-ear cress).